A 274-amino-acid polypeptide reads, in one-letter code: NADPH-dependent 7-cyano-7-deazaguanine reductase (274 aa).

Residue 80–82 coordinates substrate; that stretch reads VES. 82-83 lines the NADPH pocket; that stretch reads SK. The Thioimide intermediate role is filled by cysteine 181. Residue aspartate 188 is the Proton donor of the active site. Residue 220 to 221 coordinates substrate; that stretch reads HE. An NADPH-binding site is contributed by 249–250; that stretch reads RG.

The protein belongs to the GTP cyclohydrolase I family. QueF type 2 subfamily. As to quaternary structure, homodimer.

Its subcellular location is the cytoplasm. It carries out the reaction 7-aminomethyl-7-carbaguanine + 2 NADP(+) = 7-cyano-7-deazaguanine + 2 NADPH + 3 H(+). It functions in the pathway tRNA modification; tRNA-queuosine biosynthesis. Functionally, catalyzes the NADPH-dependent reduction of 7-cyano-7-deazaguanine (preQ0) to 7-aminomethyl-7-deazaguanine (preQ1). The polypeptide is NADPH-dependent 7-cyano-7-deazaguanine reductase (Paraburkholderia phytofirmans (strain DSM 17436 / LMG 22146 / PsJN) (Burkholderia phytofirmans)).